Consider the following 431-residue polypeptide: MFFGGEGSLTYTLVIICFLTLRLSASQNCLKKSLEDVVIDIQSSLSKGIRGNEPVYTSTQEDCINSCCSTKNISGDKACNLMIFDTRKTARQPNCYLFFCPNEEACPLKPAKGLMSYRIITDFPSLTRNLPSQELPQEDSLLHGQFSQAVTPLAHHHTDYSKPTDISWRDTLSQKFGSSDHLEKLFKMDEASAQLLAYKEKGHSQSSQFSSDQEIAHLLPENVSALPATVAVASPHTTSATPKPATLLPTNASVTPSGTSQPQLATTAPPVTTVTSQPPTTLISTVFTRAAATLQAMATTAVLTTTFQAPTDSKGSLETIPFTEISNLTLNTGNVYNPTALSMSNVESSTMNKTASWEGREASPGSSSQGSVPENQYGLPFEKWLLIGSLLFGVLFLVIGLVLLGRILSESLRRKRYSRLDYLINGIYVDI.

The signal sequence occupies residues 1–26 (MFFGGEGSLTYTLVIICFLTLRLSAS). At 27–385 (QNCLKKSLED…QYGLPFEKWL (359 aa)) the chain is on the extracellular side. The MANSC domain occupies 33-117 (SLEDVVIDIQ…LKPAKGLMSY (85 aa)). N-linked (GlcNAc...) asparagine glycosylation is found at Asn-72, Asn-222, and Asn-251. The tract at residues 234 to 277 (SPHTTSATPKPATLLPTNASVTPSGTSQPQLATTAPPVTTVTSQ) is disordered. The span at 248 to 261 (LPTNASVTPSGTSQ) shows a compositional bias: polar residues. Residues 262–277 (PQLATTAPPVTTVTSQ) show a composition bias toward low complexity. Asn-327 and Asn-352 each carry an N-linked (GlcNAc...) asparagine glycan. A disordered region spans residues 352-372 (NKTASWEGREASPGSSSQGSV). A helical membrane pass occupies residues 386-408 (LIGSLLFGVLFLVIGLVLLGRIL). At 409-431 (SESLRRKRYSRLDYLINGIYVDI) the chain is on the cytoplasmic side.

As to expression, widely expressed.

It localises to the membrane. The polypeptide is MANSC domain-containing protein 1 (MANSC1) (Homo sapiens (Human)).